The chain runs to 494 residues: Endoglucanase 1 (494 aa).

A signal peptide spans 1 to 25; that stretch reads MDCSSPLSLFHLLLVCTVMVKCCSA. Asp-82 acts as the Nucleophile in catalysis. Asn-254 and Asn-359 each carry an N-linked (GlcNAc...) asparagine glycan. Residues His-411, Asp-462, and Glu-471 contribute to the active site.

It belongs to the glycosyl hydrolase 9 (cellulase E) family.

It carries out the reaction Endohydrolysis of (1-&gt;4)-beta-D-glucosidic linkages in cellulose, lichenin and cereal beta-D-glucans.. Its function is as follows. Involved in ripening fruit process. The sequence is that of Endoglucanase 1 (CEL1) from Persea americana (Avocado).